Here is a 797-residue protein sequence, read N- to C-terminus: N-acetylneuraminate (7)9-O-acetyltransferase (797 aa).

At methionine 1–serine 18 the chain is on the cytoplasmic side. Residues valine 19–alanine 39 form a helical membrane-spanning segment. Residues serine 40–glutamine 313 lie on the Lumenal side of the membrane. Asparagine 46 is a glycosylation site (N-linked (GlcNAc...) asparagine). The Acyl-ester intermediate role is filled by serine 94. Asparagine 175 and asparagine 187 each carry an N-linked (GlcNAc...) asparagine glycan. Residues aspartate 270 and histidine 273 contribute to the active site. Residues lysine 314 to histidine 334 traverse the membrane as a helical segment. Over arginine 335–serine 363 the chain is Cytoplasmic. A helical membrane pass occupies residues leucine 364–cysteine 384. Residues aspartate 385 to lysine 395 are Lumenal-facing. The helical transmembrane segment at phenylalanine 396 to tyrosine 416 threads the bilayer. Residues asparagine 417 to glutamine 439 are Cytoplasmic-facing. The chain crosses the membrane as a helical span at residues leucine 440–isoleucine 460. Arginine 461 is a topological domain (lumenal). The chain crosses the membrane as a helical span at residues valine 462–lysine 482. At glycine 483 to glycine 486 the chain is on the cytoplasmic side. A helical transmembrane segment spans residues isoleucine 487–valine 507. The Lumenal segment spans residues methionine 508–glutamine 513. A helical membrane pass occupies residues phenylalanine 514 to leucine 534. Over tryptophan 535 to asparagine 546 the chain is Cytoplasmic. The chain crosses the membrane as a helical span at residues phenylalanine 547 to leucine 567. The Lumenal segment spans residues alanine 568–arginine 599. A helical membrane pass occupies residues tryptophan 600–leucine 620. The Cytoplasmic portion of the chain corresponds to glutamine 621–lysine 638. A helical membrane pass occupies residues isoleucine 639 to serine 659. Topologically, residues serine 660–histidine 671 are lumenal. The helical transmembrane segment at proline 672 to alanine 692 threads the bilayer. The Cytoplasmic portion of the chain corresponds to arginine 693 to serine 698. Residues phenylalanine 699–leucine 719 form a helical membrane-spanning segment. Residues alanine 720–glycine 725 are Lumenal-facing. The helical transmembrane segment at isoleucine 726–valine 746 threads the bilayer. The Cytoplasmic portion of the chain corresponds to cysteine 747–serine 770. Residues leucine 771 to isoleucine 791 traverse the membrane as a helical segment. The Lumenal segment spans residues glutamine 792–leucine 797.

It belongs to the PC-esterase family. CASD1 subfamily. Post-translationally, N-glycosylated. Ubiquitously expressed.

The protein localises to the golgi apparatus membrane. The catalysed reaction is CMP-N-acetyl-beta-neuraminate + acetyl-CoA = CMP-N-acetyl-9-O-acetyl-beta-neuraminate + CoA. The enzyme catalyses a ganglioside GD3 (d18:1(4E)) + acetyl-CoA = a ganglioside Ac-O-7-GD3(d18:1(4E)) + CoA. It carries out the reaction CMP-N-acetyl-beta-neuraminate + acetyl-CoA = CMP-N-acetyl-7-O-acetyl-beta-neuraminate + CoA. Functionally, key enzyme in the biosynthesis of O-acetylated (O-Ac) sialoglycans such as gangliosides O-AcGD3 and O-AcGD2, which affect various processes such as cell-cell interactions, host-pathogen recognition. Catalyzes the transfer of an acetyl group from a donor, the acetyl-coenzyme-A molecule (acetyl-CoA), to the C7/8/9 OH-position of a sialic acid residue. The primary site of O-acetyl group transfer on sialic acid seems to depend on cell type and can be C7, from which the O-acetyl group could subsequently migrate to the C8 and then to the C9 position, or at C9 with possibility of migrating to the C8 and then to the C7 position. Together with ST8SIA1 (GD3 synthase) it increases the levels of ganglioside Ac-O-7-GD3. Can transfer the acetyl group from acetyl-CoA to free sialate (N-acetylneuraminate, Neu5Ac) in vitro, but has preferred substrate specificity for CMP-activated sialate (CMP-Neu5Ac), resulting in the formation of 9-O-acetylated CMP-Neu5Ac (CMP-Neu5,9Ac2). CMP-Neu5,9Ac2 may be used by sialyltransferases as a sialate donor for glycoconjugate acceptors such as ganglioside GD3. O-acetylation at position C9 of ganglioside GD3 can counteract the pro-apoptotic effects of the ganglioside GD3 in tumor cells. The sequence is that of N-acetylneuraminate (7)9-O-acetyltransferase from Mus musculus (Mouse).